The primary structure comprises 398 residues: Homeobox protein knotted-1-like 1 (398 aa).

Disordered stretches follow at residues Thr43–His69, Glu172–Leu192, and Asn234–Glu277. The segment covering Ser49–Gly58 has biased composition (gly residues). Positions Glu280 to Leu300 constitute an ELK domain. Residues Ser301 to Ser364 constitute a DNA-binding region (homeobox; TALE-type).

The protein belongs to the TALE/KNOX homeobox family. Expressed only in the stems.

It is found in the nucleus. Functionally, probably binds to the DNA sequence 5'-TGAC-3'. This is Homeobox protein knotted-1-like 1 from Malus domestica (Apple).